Here is a 341-residue protein sequence, read N- to C-terminus: Chitin synthase 3 complex protein CSI2 (341 aa).

Over residues 35–70 (SSSTKAADSSSKGSSSAKTTTSLGKSSVTSKDVSSS) the composition is skewed to low complexity. Disordered stretches follow at residues 35-78 (SSST…SSTK), 272-291 (DSLS…GKFT), and 298-341 (NYTS…DGKE).

Appears to be a structural component of the chitin synthase 3 complex. The chain is Chitin synthase 3 complex protein CSI2 (CSI2) from Saccharomyces cerevisiae (strain ATCC 204508 / S288c) (Baker's yeast).